Here is a 192-residue protein sequence, read N- to C-terminus: Fe/S biogenesis protein NfuA (192 aa).

[4Fe-4S] cluster-binding residues include C149 and C152.

It belongs to the NfuA family. In terms of assembly, homodimer. Requires [4Fe-4S] cluster as cofactor.

Functionally, involved in iron-sulfur cluster biogenesis. Binds a 4Fe-4S cluster, can transfer this cluster to apoproteins, and thereby intervenes in the maturation of Fe/S proteins. Could also act as a scaffold/chaperone for damaged Fe/S proteins. The protein is Fe/S biogenesis protein NfuA of Colwellia psychrerythraea (strain 34H / ATCC BAA-681) (Vibrio psychroerythus).